The primary structure comprises 312 residues: Urease accessory protein UreD (312 aa).

A disordered region spans residues 1–50 (MRPLAPDARCAPSRPGRGPWYARRPVTTPSDPPAALREPPPPARRAGKAG).

The protein belongs to the UreD family. As to quaternary structure, ureD, UreF and UreG form a complex that acts as a GTP-hydrolysis-dependent molecular chaperone, activating the urease apoprotein by helping to assemble the nickel containing metallocenter of UreC. The UreE protein probably delivers the nickel.

Its subcellular location is the cytoplasm. Required for maturation of urease via the functional incorporation of the urease nickel metallocenter. The sequence is that of Urease accessory protein UreD from Sorangium cellulosum (strain So ce56) (Polyangium cellulosum (strain So ce56)).